The sequence spans 514 residues: 1-pyrroline-5-carboxylate dehydrogenase (514 aa).

Catalysis depends on residues glutamate 286 and cysteine 320.

It belongs to the aldehyde dehydrogenase family. RocA subfamily.

The enzyme catalyses L-glutamate 5-semialdehyde + NAD(+) + H2O = L-glutamate + NADH + 2 H(+). Its pathway is amino-acid degradation; L-proline degradation into L-glutamate; L-glutamate from L-proline: step 2/2. The sequence is that of 1-pyrroline-5-carboxylate dehydrogenase from Staphylococcus aureus (strain MW2).